The sequence spans 327 residues: Undecaprenyl-phosphate 4-deoxy-4-formamido-L-arabinose transferase (327 aa).

The Cytoplasmic segment spans residues 1–235 (MFDAAPIKKV…TCLTTTPLRL (235 aa)). A helical membrane pass occupies residues 236–256 (LSLLGSVIAIGGFSLSVLLIV). Over 257 to 269 (LRLALGPQWAAEG) the chain is Periplasmic. The chain crosses the membrane as a helical span at residues 270-290 (VFMLFAVLFTFIGAQFIGMGL). Over 291–327 (LGEYIGRIYNDVRARPRYFVQQVIYPESTPFTEESHQ) the chain is Cytoplasmic.

It belongs to the glycosyltransferase 2 family.

The protein resides in the cell inner membrane. It carries out the reaction UDP-4-deoxy-4-formamido-beta-L-arabinose + di-trans,octa-cis-undecaprenyl phosphate = 4-deoxy-4-formamido-alpha-L-arabinopyranosyl di-trans,octa-cis-undecaprenyl phosphate + UDP. The protein operates within glycolipid biosynthesis; 4-amino-4-deoxy-alpha-L-arabinose undecaprenyl phosphate biosynthesis; 4-amino-4-deoxy-alpha-L-arabinose undecaprenyl phosphate from UDP-4-deoxy-4-formamido-beta-L-arabinose and undecaprenyl phosphate: step 1/2. It functions in the pathway bacterial outer membrane biogenesis; lipopolysaccharide biosynthesis. In terms of biological role, catalyzes the transfer of 4-deoxy-4-formamido-L-arabinose from UDP to undecaprenyl phosphate. The modified arabinose is attached to lipid A and is required for resistance to polymyxin and cationic antimicrobial peptides. The polypeptide is Undecaprenyl-phosphate 4-deoxy-4-formamido-L-arabinose transferase (Salmonella choleraesuis (strain SC-B67)).